The following is a 407-amino-acid chain: Phosphopentomutase (407 aa).

Residues D10, D306, H311, D347, H348, and H359 each contribute to the Mn(2+) site.

The protein belongs to the phosphopentomutase family. It depends on Mn(2+) as a cofactor.

It is found in the cytoplasm. It carries out the reaction 2-deoxy-alpha-D-ribose 1-phosphate = 2-deoxy-D-ribose 5-phosphate. The enzyme catalyses alpha-D-ribose 1-phosphate = D-ribose 5-phosphate. It functions in the pathway carbohydrate degradation; 2-deoxy-D-ribose 1-phosphate degradation; D-glyceraldehyde 3-phosphate and acetaldehyde from 2-deoxy-alpha-D-ribose 1-phosphate: step 1/2. In terms of biological role, isomerase that catalyzes the conversion of deoxy-ribose 1-phosphate (dRib-1-P) and ribose 1-phosphate (Rib-1-P) to deoxy-ribose 5-phosphate (dRib-5-P) and ribose 5-phosphate (Rib-5-P), respectively. The polypeptide is Phosphopentomutase (Buchnera aphidicola subsp. Acyrthosiphon pisum (strain 5A)).